Reading from the N-terminus, the 622-residue chain is Kinesin light chain 2 (622 aa).

A coiled-coil region spans residues 78 to 143 (ILALSSHLGA…KQHLLFMSQI (66 aa)). The segment covering 145–164 (KLDEDASPNEEKGDVPKDTL) has biased composition (basic and acidic residues). The segment at 145 to 191 (KLDEDASPNEEKGDVPKDTLDDLFPNEDEQSPAPSPGGGDVSGQHGG) is disordered. Phosphoserine is present on residues Ser151, Ser175, and Ser179. Positions 180–190 (PGGGDVSGQHG) are enriched in gly residues. TPR repeat units follow at residues 198–231 (LRTL…LEKT), 240–273 (ATML…REKT), 282–315 (AATL…REKV), 324–357 (AKQL…YATR), and 366–399 (AKTK…AHEK). Ser445 bears the Phosphoserine mark. Residues 449–482 (NTTLRSLGALYRRQGKLEAAHTLEDCASRNRKQG) form a TPR 6 repeat. Disordered stretches follow at residues 476-548 (SRNR…SFGK) and 563-622 (KLQG…SLVG). Basic and acidic residues predominate over residues 493–509 (ELLKDGSGRRGDRRSSR). 2 positions are modified to phosphoserine: Ser508 and Ser521. Residues 538-547 (GSLRRSGSFG) are compositionally biased toward low complexity. Ser581, Ser582, Ser589, Ser608, Ser610, and Ser615 each carry phosphoserine. Residues 601–622 (LSDSRTLSSSSMDLSRRSSLVG) are compositionally biased toward low complexity.

It belongs to the kinesin light chain family. Oligomeric complex composed of two heavy chains and two light chains. Interacts (via TPR repeats) with PLEKHM2.

The protein resides in the cytoplasm. It is found in the cytoskeleton. It localises to the lysosome membrane. In terms of biological role, kinesin is a microtubule-associated force-producing protein that plays a role in organelle transport. The light chain functions in coupling of cargo to the heavy chain or in the modulation of its ATPase activity. Through binding with PLEKHM2 and ARL8B, recruits kinesin-1 to lysosomes and hence direct lysosomes movement toward microtubule plus ends. The sequence is that of Kinesin light chain 2 from Homo sapiens (Human).